The chain runs to 428 residues: Glutamate-1-semialdehyde 2,1-aminomutase (428 aa).

N6-(pyridoxal phosphate)lysine is present on lysine 265.

This sequence belongs to the class-III pyridoxal-phosphate-dependent aminotransferase family. HemL subfamily. Homodimer. Requires pyridoxal 5'-phosphate as cofactor.

The protein localises to the cytoplasm. It catalyses the reaction (S)-4-amino-5-oxopentanoate = 5-aminolevulinate. It functions in the pathway porphyrin-containing compound metabolism; protoporphyrin-IX biosynthesis; 5-aminolevulinate from L-glutamyl-tRNA(Glu): step 2/2. This is Glutamate-1-semialdehyde 2,1-aminomutase from Shewanella sediminis (strain HAW-EB3).